Here is a 198-residue protein sequence, read N- to C-terminus: Recombination protein RecR (198 aa).

The segment at 57–72 (CSICGNLTESDPCAIC) adopts a C4-type zinc-finger fold. One can recognise a Toprim domain in the interval 80 to 175 (TTILVVEESK…KVTRLAHGLA (96 aa)).

The protein belongs to the RecR family.

Its function is as follows. May play a role in DNA repair. It seems to be involved in an RecBC-independent recombinational process of DNA repair. It may act with RecF and RecO. The protein is Recombination protein RecR of Lactococcus lactis subsp. cremoris (strain SK11).